The following is a 185-amino-acid chain: Acireductone dioxygenase (185 aa).

Residues His-96, His-98, Glu-102, and His-140 each contribute to the Fe(2+) site. Ni(2+) contacts are provided by His-96, His-98, Glu-102, and His-140.

Belongs to the acireductone dioxygenase (ARD) family. In terms of assembly, monomer. Fe(2+) is required as a cofactor. Ni(2+) serves as cofactor.

The enzyme catalyses 1,2-dihydroxy-5-(methylsulfanyl)pent-1-en-3-one + O2 = 3-(methylsulfanyl)propanoate + CO + formate + 2 H(+). It carries out the reaction 1,2-dihydroxy-5-(methylsulfanyl)pent-1-en-3-one + O2 = 4-methylsulfanyl-2-oxobutanoate + formate + 2 H(+). It participates in amino-acid biosynthesis; L-methionine biosynthesis via salvage pathway; L-methionine from S-methyl-5-thio-alpha-D-ribose 1-phosphate: step 5/6. Functionally, catalyzes 2 different reactions between oxygen and the acireductone 1,2-dihydroxy-3-keto-5-methylthiopentene (DHK-MTPene) depending upon the metal bound in the active site. Fe-containing acireductone dioxygenase (Fe-ARD) produces formate and 2-keto-4-methylthiobutyrate (KMTB), the alpha-ketoacid precursor of methionine in the methionine recycle pathway. Ni-containing acireductone dioxygenase (Ni-ARD) produces methylthiopropionate, carbon monoxide and formate, and does not lie on the methionine recycle pathway. The sequence is that of Acireductone dioxygenase from Hahella chejuensis (strain KCTC 2396).